A 215-amino-acid chain; its full sequence is Large ribosomal subunit protein uL4 (215 aa).

A disordered region spans residues 43–97 (RRQGTHSTKTRAEVSGGGKKPWRQKGTGRARAGSTRSPIWVGGGKTHTPKPRDYS).

This sequence belongs to the universal ribosomal protein uL4 family. As to quaternary structure, part of the 50S ribosomal subunit.

In terms of biological role, one of the primary rRNA binding proteins, this protein initially binds near the 5'-end of the 23S rRNA. It is important during the early stages of 50S assembly. It makes multiple contacts with different domains of the 23S rRNA in the assembled 50S subunit and ribosome. Forms part of the polypeptide exit tunnel. The polypeptide is Large ribosomal subunit protein uL4 (Brachyspira pilosicoli (Serpulina pilosicoli)).